A 634-amino-acid chain; its full sequence is DNA-directed RNA polymerase subunit gamma (634 aa).

Residues Cys-74, Cys-76, Cys-89, and Cys-92 each contribute to the Zn(2+) site. Mg(2+)-binding residues include Asp-471, Asp-473, and Asp-475.

This sequence belongs to the RNA polymerase beta' chain family. RpoC1 subfamily. As to quaternary structure, in cyanobacteria the RNAP catalytic core is composed of 2 alpha, 1 beta, 1 beta', 1 gamma and 1 omega subunit. When a sigma factor is associated with the core the holoenzyme is formed, which can initiate transcription. Mg(2+) serves as cofactor. Zn(2+) is required as a cofactor.

It carries out the reaction RNA(n) + a ribonucleoside 5'-triphosphate = RNA(n+1) + diphosphate. Functionally, DNA-dependent RNA polymerase catalyzes the transcription of DNA into RNA using the four ribonucleoside triphosphates as substrates. The chain is DNA-directed RNA polymerase subunit gamma from Synechococcus sp. (strain WH7803).